Reading from the N-terminus, the 354-residue chain is MNEFKPLVFSGVQPTGNLHLGNYLGAIRKFVALQENNDCIYCVVDLHSITAQLVHEDLPGQIRSIAAAFIASGIDPEKHIVFNQSAVPQHAELAWIFNCVARIGWMNRMTQFKDKAGKDRENASLGLLAYPSLMAADILVYRATHVPVGDDQKQHLELTRDIAQKFNIDFMEHIRRGGYGVDIVVGEEPIHAYFPPVEPLIGGPAPRVMSLRDGTKKMSKSDPSDLSRINLMDDADTILKKIRKAKTDPDALPSEADGLKDRPEAENLVGIYAALADRSKEEVLAEFGGQQFSTFKPALADLAVSVLSPITGEMRRLMGDTAHIDAILRKGGERARERAETTMREVREIIGFLQ.

ATP-binding positions include 13–15 and 21–22; these read QPT and GN. Positions 14 to 22 match the 'HIGH' region motif; sequence PTGNLHLGN. Asp-137 is a binding site for L-tryptophan. ATP is bound by residues 149–151, Val-208, and 217–221; these read GDD and KMSKS. The 'KMSKS' region motif lies at 217 to 221; sequence KMSKS.

It belongs to the class-I aminoacyl-tRNA synthetase family. As to quaternary structure, homodimer.

It is found in the cytoplasm. The enzyme catalyses tRNA(Trp) + L-tryptophan + ATP = L-tryptophyl-tRNA(Trp) + AMP + diphosphate + H(+). In terms of biological role, catalyzes the attachment of tryptophan to tRNA(Trp). The protein is Tryptophan--tRNA ligase of Rhizobium meliloti (strain 1021) (Ensifer meliloti).